The following is a 380-amino-acid chain: Protein FAM110B (380 aa).

The interval 92–272 (ALGSPTLKGF…RPSLQRSKSD (181 aa)) is disordered. Residues 100-110 (GFGGGGGGAKS) are compositionally biased toward gly residues. Polar residues predominate over residues 127–138 (ILNSSEGSSTGS). The span at 153 to 162 (DAAELHRHSF) shows a compositional bias: basic and acidic residues. Residues 239 to 248 (KVAAPAAVKS) are compositionally biased toward low complexity. S248 and S311 each carry phosphoserine. The interval 327-347 (DCEQSQDSNSDLRNDDSANDR) is disordered. Basic and acidic residues predominate over residues 336–345 (SDLRNDDSAN).

It belongs to the FAM110 family.

It localises to the cytoplasm. It is found in the cytoskeleton. Its subcellular location is the microtubule organizing center. The protein resides in the centrosome. The protein is Protein FAM110B (FAM110B) of Bos taurus (Bovine).